A 306-amino-acid polypeptide reads, in one-letter code: Porphobilinogen deaminase (306 aa).

Cys239 is modified (S-(dipyrrolylmethanemethyl)cysteine).

Belongs to the HMBS family. As to quaternary structure, monomer. Dipyrromethane is required as a cofactor.

It carries out the reaction 4 porphobilinogen + H2O = hydroxymethylbilane + 4 NH4(+). It functions in the pathway porphyrin-containing compound metabolism; protoporphyrin-IX biosynthesis; coproporphyrinogen-III from 5-aminolevulinate: step 2/4. In terms of biological role, tetrapolymerization of the monopyrrole PBG into the hydroxymethylbilane pre-uroporphyrinogen in several discrete steps. In Helicobacter pylori (strain HPAG1), this protein is Porphobilinogen deaminase.